Consider the following 331-residue polypeptide: Peroxidase 49 (331 aa).

The signal sequence occupies residues 1–22; that stretch reads MARLTSFLLLLSLICFVPLCLC. 4 cysteine pairs are disulfide-bonded: cysteine 39-cysteine 119, cysteine 72-cysteine 77, cysteine 125-cysteine 326, and cysteine 204-cysteine 236. Residue histidine 70 is the Proton acceptor of the active site. The Ca(2+) site is built by aspartate 71, valine 74, glycine 76, aspartate 78, and serine 80. A substrate-binding site is contributed by proline 167. Asparagine 170 carries N-linked (GlcNAc...) asparagine glycosylation. A heme b-binding site is contributed by histidine 197. Threonine 198 provides a ligand contact to Ca(2+). An N-linked (GlcNAc...) asparagine glycan is attached at asparagine 213. Ca(2+) contacts are provided by aspartate 249, serine 252, and aspartate 257.

It belongs to the peroxidase family. Classical plant (class III) peroxidase subfamily. Heme b serves as cofactor. The cofactor is Ca(2+).

The protein localises to the secreted. It carries out the reaction 2 a phenolic donor + H2O2 = 2 a phenolic radical donor + 2 H2O. In terms of biological role, removal of H(2)O(2), oxidation of toxic reductants, biosynthesis and degradation of lignin, suberization, auxin catabolism, response to environmental stresses such as wounding, pathogen attack and oxidative stress. These functions might be dependent on each isozyme/isoform in each plant tissue. The sequence is that of Peroxidase 49 (PER49) from Arabidopsis thaliana (Mouse-ear cress).